Reading from the N-terminus, the 498-residue chain is MAKSNSKDIVLIGAGVLSTTFGSMLKEIEPDWNIHVYERLDRPAIESSNERNNAGTGHAALCELNYTVLQPDGSIDIEKAKVINEEFEISKQFWGHLVKSGSIENPRGFINPLPHISYVRGKNNVKFLKDRYEAMKAFPMFDNIEYTEDIEVMKKWIPLMMKGREDNPGIMAASKIDEGTDVNFGELTRKMAKSIEAHPNATVQFNHEVVDFEQLSNGQWEVTVKNRLTGEKFKQVTDYVFIGAGGGAIPLLQKTGIPESKHLGGFPISGQFLACTNPQVIEQHDAKVYGKEPPGTPPMTVPHLDTRYIDGQRTLLFGPFANVGPKFLKNGSNLDLFKSVKTYNITTLLAAAVKNLPLIKYSFDQVIMTKEGCMNHLRTFYPEARNEDWQLYTAGKRVQVIKDTPEHGKGFIQFGTEVVNSQDHTVIALLGESPGASTSVSVALEVLERNFPEYKTEWAPKIKKMIPSYGESLIEDEKLMRKIRKQTSKDLELGYYEN.

Belongs to the MQO family. FAD serves as cofactor.

The catalysed reaction is (S)-malate + a quinone = a quinol + oxaloacetate. It participates in carbohydrate metabolism; tricarboxylic acid cycle; oxaloacetate from (S)-malate (quinone route): step 1/1. The protein is Probable malate:quinone oxidoreductase 2 of Staphylococcus aureus (strain MW2).